The sequence spans 535 residues: UDP-glucuronosyltransferase 1A1 (535 aa).

The first 29 residues, 1–29 (MTVVCWSSRLLLLLPYLLLCVFGPSASHA), serve as a signal peptide directing secretion. N-linked (GlcNAc...) asparagine glycans are attached at residues Asn-89, Asn-297, and Asn-435. The chain crosses the membrane as a helical span at residues 493–509 (VIGFLLAIVLTVVFIVF).

Belongs to the UDP-glycosyltransferase family. As to quaternary structure, homodimers. Homooligomer. Interacts with UGT1A3, UGT1A4, UGT1A6, UGT1A7, UGT1A8, UGT1A9 and UGT1A10 to form heterodimers. Highly expressed in liver and at lower levels in colon, kidney, stomach and intestine.

Its subcellular location is the endoplasmic reticulum membrane. It carries out the reaction glucuronate acceptor + UDP-alpha-D-glucuronate = acceptor beta-D-glucuronoside + UDP + H(+). The enzyme catalyses 17beta-estradiol + UDP-alpha-D-glucuronate = 17beta-estradiol 3-O-(beta-D-glucuronate) + UDP + H(+). It catalyses the reaction 2-hydroxyestrone + UDP-alpha-D-glucuronate = 2-hydroxyestrone 3-O-(beta-D-glucuronate) + UDP + H(+). The catalysed reaction is 2-hydroxy-17beta-estradiol + UDP-alpha-D-glucuronate = 2-hydroxy-17beta-estradiol 3-O-(beta-D-glucuronate) + UDP + H(+). It carries out the reaction 2-methoxy-17beta-estradiol + UDP-alpha-D-glucuronate = 2-methoxy-17beta-estradiol 3-O-(beta-D-glucuronate) + UDP + H(+). The enzyme catalyses 17alpha-estradiol + UDP-alpha-D-glucuronate = 17alpha-estradiol 3-O-(beta-D-glucuronate) + UDP + H(+). It catalyses the reaction 16beta,17beta-estriol + UDP-alpha-D-glucuronate = 16beta,17beta-estriol 16-O-(beta-D-glucuronate) + UDP + H(+). The catalysed reaction is losartan + UDP-alpha-D-glucuronate = losartan-2-N-beta-D-glucuronide + UDP. It carries out the reaction prunetin + UDP-alpha-D-glucuronate = prunetin-4'-O-beta-D-glucuronide + UDP. The enzyme catalyses SN-38 + UDP-alpha-D-glucuronate = SN-38 O-beta-D-glucuronide + UDP + H(+). It catalyses the reaction (4Z,15Z)-bilirubin IXalpha + UDP-alpha-D-glucuronate = (4Z,15Z)-bilirubin IXalpha C12-beta-D-glucuronoside + UDP. The catalysed reaction is (4Z,15Z)-bilirubin IXalpha + UDP-alpha-D-glucuronate = (4Z,15Z)-bilirubin IXalpha C8-beta-D-glucuronoside + UDP. It carries out the reaction (4Z,15Z)-bilirubin IXalpha C8-beta-D-glucuronoside + UDP-alpha-D-glucuronate = (4Z,15Z)-bilirubin IXalpha C8,C12-beta-D-bisglucuronoside + UDP. The enzyme catalyses (4Z,15Z)-bilirubin IXalpha C12-beta-D-glucuronoside + UDP-alpha-D-glucuronate = (4Z,15Z)-bilirubin IXalpha C8,C12-beta-D-bisglucuronoside + UDP. It catalyses the reaction 8-iso-prostaglandin F2alpha + UDP-alpha-D-glucuronate = 8-iso-prostaglandin F2alpha-glucuronide + UDP + H(+). The catalysed reaction is (5Z,8Z,11Z,14Z)-eicosatetraenoate + UDP-alpha-D-glucuronate = O-[(5Z),(8Z),(11Z),(14Z)-eicosatetraenoyl]-beta-D-glucuronate + UDP. It carries out the reaction 15-hydroxy-(5Z,8Z,11Z,13E)-eicosatetraenoate + UDP-alpha-D-glucuronate = 15-O-(beta-D-glucuronosyl)-(5Z,8Z,11Z,14Z)-eicosatetraenoate + UDP + H(+). The enzyme catalyses 20-hydroxy-(5Z,8Z,11Z,14Z)-eicosatetraenoate + UDP-alpha-D-glucuronate = 20-O-(beta-D-glucuronosyl)-(5Z,8Z,11Z,14Z)-eicosatetraenoate + UDP + H(+). It catalyses the reaction prostaglandin B1 + UDP-alpha-D-glucuronate = 15-O-(beta-D-glucuronosyl)-prostaglandin B1 + UDP + H(+). The catalysed reaction is (E)-ferulate + UDP-alpha-D-glucuronate = (E)-4-O-(beta-D-glucuronosyl)-ferulate + UDP + H(+). It carries out the reaction (E)-ferulate + UDP-alpha-D-glucuronate = (E)-ferulic acid beta-D-glucuronate ester + UDP. In terms of biological role, UDP-glucuronosyltransferase (UGT) that catalyzes phase II biotransformation reactions in which lipophilic substrates are conjugated with glucuronic acid to increase the metabolite's water solubility, thereby facilitating excretion into either the urine or bile. Essential for the elimination and detoxification of drugs, xenobiotics and endogenous compounds. Catalyzes the glucuronidation of endogenous estrogen hormones such as estradiol, estrone and estriol. Involved in the glucuronidation of bilirubin, a degradation product occurring in the normal catabolic pathway that breaks down heme in vertebrates. Involved in the glucuronidation of arachidonic acid (AA) and AA-derived eicosanoids including 15-HETE, 20-HETE, PGB1 and F2-isoprostane (8-iso-PGF2alpha). Involved in the glucuronidation of the phytochemical ferulic acid at the phenolic or the carboxylic acid group. Also catalyzes the glucuronidation the isoflavones genistein, daidzein, glycitein, formononetin, biochanin A and prunetin, which are phytoestrogens with anticancer and cardiovascular properties. Involved in the glucuronidation of the AGTR1 angiotensin receptor antagonist losartan, a drug which can inhibit the effect of angiotensin II. Involved in the biotransformation of 7-ethyl-10-hydroxycamptothecin (SN-38), the pharmacologically active metabolite of the anticancer drug irinotecan. The polypeptide is UDP-glucuronosyltransferase 1A1 (Mus musculus (Mouse)).